The following is an 85-amino-acid chain: MVLNPSKYQDTRTWKMTPAMIRARKPFFKGNMLGLTLLLGVTGSVYYYTYHFLHKDNDFADVPIPPIDPQELEALKKEYEAKKKA.

Topologically, residues 1 to 26 (MVLNPSKYQDTRTWKMTPAMIRARKP) are mitochondrial matrix. A helical transmembrane segment spans residues 27 to 49 (FFKGNMLGLTLLLGVTGSVYYYT). Residues 50-85 (YHFLHKDNDFADVPIPPIDPQELEALKKEYEAKKKA) are Mitochondrial intermembrane-facing.

This sequence belongs to the COA3 family. Component of 250-400 kDa complexes called cytochrome oxidase assembly intermediates or COA complexes composed at least COA3, COX14, COX5A, SHY1 and SSC1. Interacts with COX1 and MSS51.

It localises to the mitochondrion inner membrane. Functionally, required for assembly of cytochrome c oxidase (complex IV). With COX14, negatively regulates COX1 translation and is involved in MSS51 association with newly synthesized COX1. This chain is Cytochrome c oxidase assembly factor 3, mitochondrial (COA3), found in Saccharomyces cerevisiae (strain RM11-1a) (Baker's yeast).